Here is a 385-residue protein sequence, read N- to C-terminus: Transcription factor TGAL3 (385 aa).

The interval 62–113 (LHALVGGGDGGDDAGEQRGADSSAVSKERRGDQKMQRRLAQNREAARKSRMR) is disordered. Residues 87 to 96 (SKERRGDQKM) are compositionally biased toward basic and acidic residues. Residues 93–137 (DQKMQRRLAQNREAARKSRMRKKAYIQQLESSRSKLMHLEQELQR) form the bZIP domain. The basic motif stretch occupies residues 95 to 115 (KMQRRLAQNREAARKSRMRKK). A leucine-zipper region spans residues 121–135 (LESSRSKLMHLEQEL). The 221-residue stretch at 162-382 (TLAFDLEYAR…RALSSLWLAR (221 aa)) folds into the DOG1 domain.

It belongs to the bZIP family. Interacts with NPR1/NH1, NPR2/NH2 and NPR3/NH3.

It is found in the nucleus. Functionally, transcriptional regulator involved in defense response. The chain is Transcription factor TGAL3 from Oryza sativa subsp. japonica (Rice).